We begin with the raw amino-acid sequence, 208 residues long: Putative vomeronasal receptor-like protein 4 (208 aa).

Residues 1–19 (MEMTKLFSYIVIKNVYYPQ) are Extracellular-facing. The chain crosses the membrane as a helical span at residues 20-40 (VSFGISANTFLLLFHIFTFAY). Topologically, residues 41–48 (THRLKPID) are cytoplasmic. The helical transmembrane segment at 49–69 (MTISHLPLIHILLLFTQAILV) threads the bilayer. At 70-97 (SSDLFESWNIQNNDLKCKIITFLNRVMR) the chain is on the extracellular side. A disulfide bridge connects residues C86 and C173. A helical transmembrane segment spans residues 98 to 118 (GVSICTTCLLSVLQAITISPS). Over 119-135 (TSFLEKFKHISANHTLG) the chain is Cytoplasmic. Residues 136–156 (FILFSWVLNMFITNNLLLFIV) traverse the membrane as a helical segment. The Extracellular segment spans residues 157-183 (PTPNRIGASLLFVTEHCYVLPMSYTHR). A helical transmembrane segment spans residues 184–204 (SLFFILMVLRDVIFIGLMVLS). At 205–208 (SGYG) the chain is on the cytoplasmic side.

The protein belongs to the G-protein coupled receptor 1 family. Expressed in olfactory nerve.

It localises to the cell membrane. Its function is as follows. Putative pheromone receptor. This is Putative vomeronasal receptor-like protein 4 (VN1R17P) from Homo sapiens (Human).